The chain runs to 301 residues: Glycine--tRNA ligase alpha subunit (301 aa).

The protein belongs to the class-II aminoacyl-tRNA synthetase family. Tetramer of two alpha and two beta subunits.

The protein resides in the cytoplasm. The catalysed reaction is tRNA(Gly) + glycine + ATP = glycyl-tRNA(Gly) + AMP + diphosphate. The polypeptide is Glycine--tRNA ligase alpha subunit (Neisseria meningitidis serogroup C (strain 053442)).